The primary structure comprises 581 residues: Protein ORF B (581 aa).

This Elephas maximus (Indian elephant) protein is Protein ORF B.